Consider the following 204-residue polypeptide: Urease accessory protein UreG (204 aa).

Glycine 13 to threonine 20 contributes to the GTP binding site.

This sequence belongs to the SIMIBI class G3E GTPase family. UreG subfamily. As to quaternary structure, homodimer. UreD, UreF and UreG form a complex that acts as a GTP-hydrolysis-dependent molecular chaperone, activating the urease apoprotein by helping to assemble the nickel containing metallocenter of UreC. The UreE protein probably delivers the nickel.

The protein localises to the cytoplasm. In terms of biological role, facilitates the functional incorporation of the urease nickel metallocenter. This process requires GTP hydrolysis, probably effectuated by UreG. The chain is Urease accessory protein UreG from Acinetobacter baylyi (strain ATCC 33305 / BD413 / ADP1).